A 91-amino-acid polypeptide reads, in one-letter code: Small ribosomal subunit protein uS19 (91 aa).

Belongs to the universal ribosomal protein uS19 family.

Protein S19 forms a complex with S13 that binds strongly to the 16S ribosomal RNA. The sequence is that of Small ribosomal subunit protein uS19 from Pseudomonas fluorescens (strain SBW25).